A 332-amino-acid chain; its full sequence is Holliday junction branch migration complex subunit RuvB (332 aa).

A large ATPase domain (RuvB-L) region spans residues 1 to 181 (MTRFLDSDAM…FGITGHMEYY (181 aa)). ATP contacts are provided by residues Leu-20, Arg-21, Gly-62, Lys-65, Thr-66, Thr-67, 128 to 130 (EDF), Arg-171, Tyr-181, and Arg-218. Thr-66 serves as a coordination point for Mg(2+). The tract at residues 182-252 (EENDLTEIIE…ITDKALTMLD (71 aa)) is small ATPAse domain (RuvB-S). The segment at 255-332 (HEGLDYVDQK…EHLGYQRFDK (78 aa)) is head domain (RuvB-H). DNA is bound by residues Arg-291, Arg-310, Arg-312, and Arg-315.

This sequence belongs to the RuvB family. As to quaternary structure, homohexamer. Forms an RuvA(8)-RuvB(12)-Holliday junction (HJ) complex. HJ DNA is sandwiched between 2 RuvA tetramers; dsDNA enters through RuvA and exits via RuvB. An RuvB hexamer assembles on each DNA strand where it exits the tetramer. Each RuvB hexamer is contacted by two RuvA subunits (via domain III) on 2 adjacent RuvB subunits; this complex drives branch migration. In the full resolvosome a probable DNA-RuvA(4)-RuvB(12)-RuvC(2) complex forms which resolves the HJ.

Its subcellular location is the cytoplasm. It carries out the reaction ATP + H2O = ADP + phosphate + H(+). In terms of biological role, the RuvA-RuvB-RuvC complex processes Holliday junction (HJ) DNA during genetic recombination and DNA repair, while the RuvA-RuvB complex plays an important role in the rescue of blocked DNA replication forks via replication fork reversal (RFR). RuvA specifically binds to HJ cruciform DNA, conferring on it an open structure. The RuvB hexamer acts as an ATP-dependent pump, pulling dsDNA into and through the RuvAB complex. RuvB forms 2 homohexamers on either side of HJ DNA bound by 1 or 2 RuvA tetramers; 4 subunits per hexamer contact DNA at a time. Coordinated motions by a converter formed by DNA-disengaged RuvB subunits stimulates ATP hydrolysis and nucleotide exchange. Immobilization of the converter enables RuvB to convert the ATP-contained energy into a lever motion, pulling 2 nucleotides of DNA out of the RuvA tetramer per ATP hydrolyzed, thus driving DNA branch migration. The RuvB motors rotate together with the DNA substrate, which together with the progressing nucleotide cycle form the mechanistic basis for DNA recombination by continuous HJ branch migration. Branch migration allows RuvC to scan DNA until it finds its consensus sequence, where it cleaves and resolves cruciform DNA. In Streptococcus agalactiae serotype V (strain ATCC BAA-611 / 2603 V/R), this protein is Holliday junction branch migration complex subunit RuvB.